The sequence spans 147 residues: Spermidine export protein MdtJ (147 aa).

The next 4 membrane-spanning stretches (helical) occupy residues 1–21 (MIYW…TLSM), 31–51 (TGHV…SLAV), 54–74 (VALG…ITIF), and 81–101 (ETLS…ILLV). The segment covering 105–117 (TRKPKQPNRHRGN) has biased composition (basic residues). The interval 105–147 (TRKPKQPNRHRGNRPPSVQGLKTQTTGHHKGVAVESGEHHAAA) is disordered.

This sequence belongs to the drug/metabolite transporter (DMT) superfamily. Small multidrug resistance (SMR) (TC 2.A.7.1) family. MdtJ subfamily. In terms of assembly, forms a complex with MdtI.

It is found in the cell inner membrane. In terms of biological role, catalyzes the excretion of spermidine. The polypeptide is Spermidine export protein MdtJ (Yersinia pseudotuberculosis serotype IB (strain PB1/+)).